A 332-amino-acid chain; its full sequence is Glyceraldehyde-3-phosphate dehydrogenase (332 aa).

Residues 10–11 (RI), Asp-36, Lys-81, and Ser-116 each bind NAD(+). D-glyceraldehyde 3-phosphate-binding positions include 150–152 (SCT), Thr-181, Arg-197, 210–211 (TK), and Arg-233. Cys-151 (nucleophile) is an active-site residue. An NAD(+)-binding site is contributed by Asn-314.

This sequence belongs to the glyceraldehyde-3-phosphate dehydrogenase family. In terms of assembly, homotetramer.

The protein resides in the cytoplasm. It carries out the reaction D-glyceraldehyde 3-phosphate + phosphate + NAD(+) = (2R)-3-phospho-glyceroyl phosphate + NADH + H(+). The protein operates within carbohydrate degradation; glycolysis; pyruvate from D-glyceraldehyde 3-phosphate: step 1/5. Its function is as follows. Catalyzes the oxidative phosphorylation of glyceraldehyde 3-phosphate (G3P) to 1,3-bisphosphoglycerate (BPG) using the cofactor NAD. The first reaction step involves the formation of a hemiacetal intermediate between G3P and a cysteine residue, and this hemiacetal intermediate is then oxidized to a thioester, with concomitant reduction of NAD to NADH. The reduced NADH is then exchanged with the second NAD, and the thioester is attacked by a nucleophilic inorganic phosphate to produce BPG. The protein is Glyceraldehyde-3-phosphate dehydrogenase (gapA) of Helicobacter pylori (strain J99 / ATCC 700824) (Campylobacter pylori J99).